Consider the following 263-residue polypeptide: Protein M1627_2099 (263 aa).

Belongs to the CinA family.

This chain is Protein M1627_2099, found in Saccharolobus islandicus (strain M.16.27) (Sulfolobus islandicus).